A 124-amino-acid polypeptide reads, in one-letter code: MTERVTYRAKTKFLVASPTKVRPVANVVKCKPYVRAMALLGHLPHKGARLISKVMKSAASNAIDRDKRLDEERLFVRDIQIDEGPRLKRLWCRGRGRGDVQLKRMCHITVVVEESVRTKDGSKG.

The protein belongs to the universal ribosomal protein uL22 family. Part of the 50S ribosomal subunit.

Its function is as follows. This protein binds specifically to 23S rRNA; its binding is stimulated by other ribosomal proteins, e.g. L4, L17, and L20. It is important during the early stages of 50S assembly. It makes multiple contacts with different domains of the 23S rRNA in the assembled 50S subunit and ribosome. Functionally, the globular domain of the protein is located near the polypeptide exit tunnel on the outside of the subunit, while an extended beta-hairpin is found that lines the wall of the exit tunnel in the center of the 70S ribosome. The sequence is that of Large ribosomal subunit protein uL22 from Treponema pallidum (strain Nichols).